The chain runs to 397 residues: ORC1-type DNA replication protein 1 (397 aa).

Residues 67–71, Tyr-208, and Arg-220 each bind ATP; that span reads TGKTA.

Belongs to the CDC6/cdc18 family.

Involved in regulation of DNA replication. The chain is ORC1-type DNA replication protein 1 (cdc6-1) from Sulfolobus acidocaldarius (strain ATCC 33909 / DSM 639 / JCM 8929 / NBRC 15157 / NCIMB 11770).